Reading from the N-terminus, the 474-residue chain is MSFIPVEHIACSTAKLPSSRCPLLLLQPNGSSTKPVRWRSACNQCHAAKVRCSGERTGCDRCNNLQYQCVYAISRVGKVPGVRARGNKAVRTTTEALQRPATASTLPDADSTGEFQTDQRSENDPLSRSDFGEQDAAHDALSPKSHSALFPDWTEASDKSLNAYETADLFILPSQLMSSDQDPSRSRGHSLQAPSHSGHSIADSHTAAMPDGGLFCPFNKPTTPIPALPDLDLHIQDFHPMDVPVSPLDNGPPVKRRPYSDASCGHSGHSSKGYMSSTFPYSELLSQIGCQTDCGRQPHHYNYRSWTVLICNRIVEFLEHRIQGGVVALDVVMQTNKVTLGEISRILSKGAHKEGSNCAMLLLIAIDQIVTLFECGVKQGSPGDSDRASIGGRDLSALGDDLTGGNVLPNLRFGLFQINQDEQLALRSYLLQRELQRCLQVLTNLRDAIPLEPNPCTALEARVKKLCSAIADSH.

A DNA-binding region (zn(2)-C6 fungal-type) is located at residues Cys42–Cys69. 2 disordered regions span residues Arg85–Ala148 and Met177–Thr206. Residues Val90–Thr105 show a composition bias toward polar residues. Over residues Thr117 to His138 the composition is skewed to basic and acidic residues.

Its subcellular location is the nucleus. Functionally, transcription factor that specifically regulates the gene cluster that mediates the biosynthesis of aspirochlorine (or antibiotic A30641), an unusual halogenated spiro compound with distinctive antifungal properties due to selective inhibition of protein biosynthesis, and which is also active against bacteria, viruses, and murine tumor cells. This Aspergillus oryzae (strain ATCC 42149 / RIB 40) (Yellow koji mold) protein is C6 finger domain transcription factor aclZ.